A 2126-amino-acid polypeptide reads, in one-letter code: Phthioceranic/hydroxyphthioceranic acid synthase (2126 aa).

The Ketosynthase family 3 (KS3) domain maps to 24–447 (VTPVAVIGMA…GTNVHAVVEQ (424 aa)). C196 acts as the Acyl-thioester intermediate; for beta-ketoacyl synthase activity in catalysis. Active-site for beta-ketoacyl synthase activity residues include H331 and H367. Positions 449-549 (PQTEAQPHAA…VYQPAVGQDD (101 aa)) are linker domain (LD). The tract at residues 550–849 (RGPVWLFSGQ…VAALAGMRRE (300 aa)) is acyltransferase (AT). The Acyl-ester intermediate; for acyltransferase activity role is filled by S641. Residues 909-1191 (STVAVHPLLG…LAVCGLRIGT (283 aa)) form a dehydratase (DH) region. The N-terminal hotdog fold stretch occupies residues 914–1032 (HPLLGAHVRL…RRASAVLQQV (119 aa)). Positions 914–1198 (HPLLGAHVRL…IGTGVSERDK (285 aa)) constitute a PKS/mFAS DH domain. H947 (proton acceptor; for dehydratase activity) is an active-site residue. The tract at residues 1051–1198 (PCRVDGEDLR…IGTGVSERDK (148 aa)) is C-terminal hotdog fold. D1115 serves as the catalytic Proton donor; for dehydratase activity. Residues 1227-1398 (KWLLISDCAA…SEEDETAWRD (172 aa)) are pseudo beta-ketoacyl reductase (PsiKR). The tract at residues 1426–1750 (SGMRLQIRTP…EHTGKLVLHI (325 aa)) is enoylreductase (ER). A beta-ketoacyl reductase (KR) region spans residues 1772–2019 (GSYIITGGLG…AERSRFFEVF (248 aa)). Residues 1780–1783 (LGGL), 1803–1806 (SRTQ), 1831–1832 (DI), and 1904–1905 (FS) each bind NADP(+). The region spanning 2040–2126 (DEWPARLRQL…DAPAAALSSQ (87 aa)) is the Carrier domain. Residue S2075 is modified to O-(pantetheine 4'-phosphoryl)serine.

Pantetheine 4'-phosphate serves as cofactor.

It catalyses the reaction hexadecanoyl-[(hydroxy)phthioceranic acid synthase] + 7 (S)-methylmalonyl-CoA + 14 NADPH + 21 H(+) = C37-phthioceranyl-[(hydroxy)phthioceranic acid synthase] + 7 CO2 + 14 NADP(+) + 7 CoA + 7 H2O. It carries out the reaction hexadecanoyl-[(hydroxy)phthioceranic acid synthase] + 8 (S)-methylmalonyl-CoA + 16 NADPH + 24 H(+) = C40-phthioceranyl-[(hydroxy)phthioceranic acid synthase] + 8 CO2 + 16 NADP(+) + 8 CoA + 8 H2O. The protein operates within lipid metabolism; fatty acid biosynthesis. Its pathway is glycolipid metabolism; sulfolipid-1 biosynthesis. In terms of biological role, involved in sulfolipid-1 biosynthesis. Catalyzes the synthesis of the hepta- and octamethyl phthioceranic and hydroxyphthioceranic acids, the methyl-branched acyl constituents of sulfolipids. The protein is Phthioceranic/hydroxyphthioceranic acid synthase (pks2) of Mycobacterium bovis (strain ATCC BAA-935 / AF2122/97).